The following is a 231-amino-acid chain: NADH-ubiquinone oxidoreductase chain 4 (231 aa).

6 consecutive transmembrane segments (helical) span residues 1–21 (PIAG…YGII), 34–54 (MFLP…LTCL), 63–85 (IAYS…TPWG), 89–111 (AMTL…NTTY), 128–148 (ILPM…AIPP), and 156–176 (LLIM…LGLS).

Belongs to the complex I subunit 4 family.

It is found in the mitochondrion membrane. The catalysed reaction is a ubiquinone + NADH + 5 H(+)(in) = a ubiquinol + NAD(+) + 4 H(+)(out). Functionally, core subunit of the mitochondrial membrane respiratory chain NADH dehydrogenase (Complex I) that is believed to belong to the minimal assembly required for catalysis. Complex I functions in the transfer of electrons from NADH to the respiratory chain. The immediate electron acceptor for the enzyme is believed to be ubiquinone. The sequence is that of NADH-ubiquinone oxidoreductase chain 4 (MT-ND4) from Gloydius intermedius (Central Asian pit viper).